Consider the following 102-residue polypeptide: Small ribosomal subunit protein uS10 (102 aa).

The protein belongs to the universal ribosomal protein uS10 family. Part of the 30S ribosomal subunit.

Its function is as follows. Involved in the binding of tRNA to the ribosomes. In Streptococcus thermophilus (strain CNRZ 1066), this protein is Small ribosomal subunit protein uS10.